Here is a 288-residue protein sequence, read N- to C-terminus: tRNA dimethylallyltransferase (288 aa).

17-24 (GPTASGKS) is a binding site for ATP. 19–24 (TASGKS) is a substrate binding site.

Belongs to the IPP transferase family. In terms of assembly, monomer. Mg(2+) is required as a cofactor.

The catalysed reaction is adenosine(37) in tRNA + dimethylallyl diphosphate = N(6)-dimethylallyladenosine(37) in tRNA + diphosphate. Its function is as follows. Catalyzes the transfer of a dimethylallyl group onto the adenine at position 37 in tRNAs that read codons beginning with uridine, leading to the formation of N6-(dimethylallyl)adenosine (i(6)A). In Ruegeria sp. (strain TM1040) (Silicibacter sp.), this protein is tRNA dimethylallyltransferase.